The chain runs to 264 residues: Thymidylate synthase (264 aa).

Residue R21 coordinates dUMP. H51 contacts (6R)-5,10-methylene-5,6,7,8-tetrahydrofolate. Residue 126-127 (RR) coordinates dUMP. The Nucleophile role is filled by C146. Residues 166 to 169 (RSVD), N177, and 207 to 209 (HLY) each bind dUMP. Residue D169 participates in (6R)-5,10-methylene-5,6,7,8-tetrahydrofolate binding. Residue S263 participates in (6R)-5,10-methylene-5,6,7,8-tetrahydrofolate binding.

The protein belongs to the thymidylate synthase family. Bacterial-type ThyA subfamily. In terms of assembly, homodimer.

The protein resides in the cytoplasm. It catalyses the reaction dUMP + (6R)-5,10-methylene-5,6,7,8-tetrahydrofolate = 7,8-dihydrofolate + dTMP. It functions in the pathway pyrimidine metabolism; dTTP biosynthesis. Catalyzes the reductive methylation of 2'-deoxyuridine-5'-monophosphate (dUMP) to 2'-deoxythymidine-5'-monophosphate (dTMP) while utilizing 5,10-methylenetetrahydrofolate (mTHF) as the methyl donor and reductant in the reaction, yielding dihydrofolate (DHF) as a by-product. This enzymatic reaction provides an intracellular de novo source of dTMP, an essential precursor for DNA biosynthesis. This chain is Thymidylate synthase, found in Anoxybacillus flavithermus (strain DSM 21510 / WK1).